We begin with the raw amino-acid sequence, 98 residues long: Small ribosomal subunit protein uS19 (98 aa).

The protein belongs to the universal ribosomal protein uS19 family.

In terms of biological role, protein S19 forms a complex with S13 that binds strongly to the 16S ribosomal RNA. The chain is Small ribosomal subunit protein uS19 from Chlorobaculum tepidum (strain ATCC 49652 / DSM 12025 / NBRC 103806 / TLS) (Chlorobium tepidum).